We begin with the raw amino-acid sequence, 196 residues long: Peroxiredoxin TSA1-B (196 aa).

The 159-residue stretch at 3 to 161 (PVVQQPAPSF…SLRLLEAFQF (159 aa)) folds into the Thioredoxin domain. 45 to 47 (TFV) provides a ligand contact to substrate. Cysteine 48 functions as the Cysteine sulfenic acid (-SOH) intermediate in the catalytic mechanism. Arginine 124 lines the substrate pocket. Residues 173-196 (WHPGDETIKPSPEASKEYFNKVNK) are disordered. Basic and acidic residues predominate over residues 175 to 196 (PGDETIKPSPEASKEYFNKVNK).

Belongs to the peroxiredoxin family. AhpC/Prx1 subfamily. Homodimer; disulfide-linked, upon oxidation.

The protein localises to the cell surface. The protein resides in the nucleus. It localises to the cytoplasm. The enzyme catalyses a hydroperoxide + [thioredoxin]-dithiol = an alcohol + [thioredoxin]-disulfide + H2O. In terms of biological role, thiol-specific peroxidase that catalyzes the reduction of hydrogen peroxide and organic hydroperoxides to water and alcohols, respectively. Plays a role in cell protection against oxidative stress by detoxifying peroxides and as sensor of hydrogen peroxide-mediated signaling events. Also involved in the correct composition of the hyphal cell wall. This chain is Peroxiredoxin TSA1-B, found in Candida albicans (strain SC5314 / ATCC MYA-2876) (Yeast).